We begin with the raw amino-acid sequence, 179 residues long: Large ribosomal subunit protein uL6 (179 aa).

This sequence belongs to the universal ribosomal protein uL6 family. Part of the 50S ribosomal subunit.

Functionally, this protein binds to the 23S rRNA, and is important in its secondary structure. It is located near the subunit interface in the base of the L7/L12 stalk, and near the tRNA binding site of the peptidyltransferase center. The chain is Large ribosomal subunit protein uL6 from Gemmatimonas aurantiaca (strain DSM 14586 / JCM 11422 / NBRC 100505 / T-27).